Reading from the N-terminus, the 57-residue chain is UPF0391 membrane protein RPE_2138 (57 aa).

Helical transmembrane passes span 4–24 (WVVT…GGIA) and 30–50 (IAKI…VIGL).

This sequence belongs to the UPF0391 family.

It localises to the cell membrane. The protein is UPF0391 membrane protein RPE_2138 of Rhodopseudomonas palustris (strain BisA53).